Consider the following 288-residue polypeptide: Intermediate transcription factor 3 small subunit (288 aa).

This sequence belongs to the orthopoxvirus OPG134 family. Heterodimer of a 45 kDa (A23R) and a 32 kDa (A8R) subunit to form the virus intermediate transcription factor (VITF)-3.

Functionally, acts with RNA polymerase to initiate transcription from intermediate gene promoters. In Vaccinia virus (strain Copenhagen) (VACV), this protein is Intermediate transcription factor 3 small subunit (OPG134).